The sequence spans 269 residues: Magnetosome protein MamX (269 aa).

At 1 to 10 the chain is on the cytoplasmic side; that stretch reads MNTKAVAHPD. The chain crosses the membrane as a helical span at residues 11 to 31; sequence IAVWIMALGIAFSMALVLTAL. At 32-269 the chain is on the lumenal side; sequence FNANPWEDHT…NVGGVDAEER (238 aa). The short motif at 48 to 71 is the MCR (magnetochrome) 1 element; sequence IVAGMAAPHRDGREKMVCSSCHIV. Heme is bound by residues Cys65, Cys68, His69, Cys104, Cys107, and His108. Positions 87-110 match the MCR 2 motif; it reads IVEGTPAPHVDGREKMACASCHTI.

It belongs to the magnetosome MamX family. As to quaternary structure, probably interacts with FtsZ-like and MamY proteins. Heme is required as a cofactor.

It is found in the magnetosome membrane. Its function is as follows. Required for correct biomineralization of the magnetosome, maybe via redox control. May function with MamY, MamZ amd Mms6 in biomineralization. The chain is Magnetosome protein MamX from Magnetospirillum gryphiswaldense (strain DSM 6361 / JCM 21280 / NBRC 15271 / MSR-1).